The sequence spans 509 residues: tRNA (guanine(37)-N(1))-methyltransferase (509 aa).

The N-terminal 57 residues, 1–57 (MVLWILWRPFGFSRRLLKLERHSITESKSLIPLAWTSLTQTLSESPGIFLLGQRKRF), are a transit peptide targeting the mitochondrion. S-adenosyl-L-methionine-binding positions include His-289, 327-328 (DL), 355-356 (DG), and Asn-387. The segment at 478 to 509 (TKNPENHEDPPLKRQRTAEAFSDEKTQIASNT) is disordered.

It belongs to the class I-like SAM-binding methyltransferase superfamily. TRM5/TYW2 family. Monomer.

The protein localises to the mitochondrion matrix. The protein resides in the nucleus. It localises to the cytoplasm. The enzyme catalyses guanosine(37) in tRNA + S-adenosyl-L-methionine = N(1)-methylguanosine(37) in tRNA + S-adenosyl-L-homocysteine + H(+). Involved in mitochondrial tRNA methylation. Specifically methylates the N1 position of guanosine-37 in various tRNAs. Methylation is not dependent on the nature of the nucleoside 5' of the target nucleoside. This is the first step in the biosynthesis of wybutosine (yW), a modified base adjacent to the anticodon of tRNAs and required for accurate decoding. The chain is tRNA (guanine(37)-N(1))-methyltransferase from Macaca fascicularis (Crab-eating macaque).